The chain runs to 534 residues: 5'-nucleotidase domain-containing protein 3 (534 aa).

The active-site Nucleophile is D104. Positions 104 and 106 each coordinate Mg(2+). D106 (proton donor) is an active-site residue. 234-242 (KEAIRDVHV) is a binding site for substrate. D372 provides a ligand contact to Mg(2+).

It belongs to the 5'(3')-deoxyribonucleotidase family. Requires Mg(2+) as cofactor.

This chain is 5'-nucleotidase domain-containing protein 3 (nt5dc3), found in Xenopus tropicalis (Western clawed frog).